The sequence spans 957 residues: Bifunctional glutamine synthetase adenylyltransferase/adenylyl-removing enzyme (957 aa).

Residues 1 to 447 (MFSQLDFTGL…IFNQLIGEEE (447 aa)) are adenylyl removase. Residues 454 to 957 (VNEQLAIWQD…IWQQIFTDNE (504 aa)) form an adenylyl transferase region.

It belongs to the GlnE family. It depends on Mg(2+) as a cofactor.

The catalysed reaction is [glutamine synthetase]-O(4)-(5'-adenylyl)-L-tyrosine + phosphate = [glutamine synthetase]-L-tyrosine + ADP. The enzyme catalyses [glutamine synthetase]-L-tyrosine + ATP = [glutamine synthetase]-O(4)-(5'-adenylyl)-L-tyrosine + diphosphate. Its function is as follows. Involved in the regulation of glutamine synthetase GlnA, a key enzyme in the process to assimilate ammonia. When cellular nitrogen levels are high, the C-terminal adenylyl transferase (AT) inactivates GlnA by covalent transfer of an adenylyl group from ATP to specific tyrosine residue of GlnA, thus reducing its activity. Conversely, when nitrogen levels are low, the N-terminal adenylyl removase (AR) activates GlnA by removing the adenylyl group by phosphorolysis, increasing its activity. The regulatory region of GlnE binds the signal transduction protein PII (GlnB) which indicates the nitrogen status of the cell. In Haemophilus ducreyi (strain 35000HP / ATCC 700724), this protein is Bifunctional glutamine synthetase adenylyltransferase/adenylyl-removing enzyme.